Consider the following 137-residue polypeptide: Acidic phospholipase A2 1 (137 aa).

The N-terminal stretch at 1-11 is a signal peptide; sequence LVAVCVSLLGA. Positions 12 to 19 are excised as a propeptide; sequence ANIPPQPL. Disulfide bonds link Cys-30–Cys-89, Cys-44–Cys-136, Cys-46–Cys-62, Cys-61–Cys-117, Cys-68–Cys-110, Cys-78–Cys-103, and Cys-96–Cys-108. Ca(2+)-binding residues include Tyr-45, Gly-47, and Gly-49. Tridecanoate contacts are provided by Gly-49 and His-65. The active site involves His-65. Position 66 (Asp-66) interacts with Ca(2+). Asp-111 is a catalytic residue.

As to quaternary structure, monomer. Requires Ca(2+) as cofactor. In terms of tissue distribution, expressed by the venom gland.

It is found in the secreted. The enzyme catalyses a 1,2-diacyl-sn-glycero-3-phosphocholine + H2O = a 1-acyl-sn-glycero-3-phosphocholine + a fatty acid + H(+). Its function is as follows. Snake venom phospholipase A2 (PLA2) that shows anticoagulant and neurotoxic activities. PLA2 catalyzes the calcium-dependent hydrolysis of the 2-acyl groups in 3-sn-phosphoglycerides. In Bungarus caeruleus (Indian krait), this protein is Acidic phospholipase A2 1.